A 340-amino-acid polypeptide reads, in one-letter code: Deubiquitinase SseL (340 aa).

The active site involves H223. C285 functions as the Nucleophile in the catalytic mechanism.

Belongs to the peptidase C79 family.

The protein resides in the secreted. Its subcellular location is the host cytoplasm. Functionally, effector proteins function to alter host cell physiology and promote bacterial survival in host tissues. This protease targets the host cell ubiquitin pathway by acting as a deubiquitinase in infected host cells. This is Deubiquitinase SseL (sseL) from Salmonella paratyphi B (strain ATCC BAA-1250 / SPB7).